We begin with the raw amino-acid sequence, 132 residues long: T-cell receptor alpha chain V region CTL-F3 (132 aa).

Positions 1–22 (MNMRPDTCSVLVLLLMLRRNNG) are cleaved as a signal peptide. The v segment stretch occupies residues 23–114 (DSVTQTEGLV…DSALYYCALS (92 aa)). An N-linked (GlcNAc...) asparagine glycan is attached at Asn43. Cys44 and Cys111 are oxidised to a cystine. Residues 115 to 132 (NAGAKLTFGGGTRLTVRP) form a j segment region.

The polypeptide is T-cell receptor alpha chain V region CTL-F3 (Mus musculus (Mouse)).